Consider the following 653-residue polypeptide: Brain-enriched guanylate kinase-associated protein (653 aa).

Residue Y186 is modified to Phosphotyrosine. Residues 241–271 form a disordered region; the sequence is PGSLSSHLSEASAQDLGFPEGLEKPGSRPPY. Residues 243–252 are compositionally biased toward polar residues; it reads SLSSHLSEAS. S249, S278, S295, and S314 each carry phosphoserine. A disordered region spans residues 288-329; the sequence is RHQDRRPSVEGPGSDVGFLQAQNSTDSTAEEEEEEEEDTEAG. Over residues 315 to 327 the composition is skewed to acidic residues; the sequence is TAEEEEEEEEDTE. Phosphoserine is present on residues S400 and S427. Asymmetric dimethylarginine is present on R435. Residues S523, S533, S535, S558, S560, S564, S613, and S623 each carry the phosphoserine modification. The tract at residues 587–653 is disordered; that stretch reads GASGSPEPEL…KAQLYGTLLN (67 aa).

Interacts with DLG4 and DLGAP1 and forms a ternary complex.

The protein localises to the cytoplasm. It localises to the membrane. In terms of biological role, may sustain the structure of the postsynaptic density (PSD). This chain is Brain-enriched guanylate kinase-associated protein (BEGAIN), found in Ovis aries (Sheep).